A 437-amino-acid polypeptide reads, in one-letter code: Glutamyl-tRNA reductase (437 aa).

Substrate-binding positions include 49-52, Ser109, 114-116, and Gln120; these read TCNR and ETQ. The Nucleophile role is filled by Cys50. NADP(+) is bound at residue 189–194; it reads GAGEMS.

The protein belongs to the glutamyl-tRNA reductase family. Homodimer.

The enzyme catalyses (S)-4-amino-5-oxopentanoate + tRNA(Glu) + NADP(+) = L-glutamyl-tRNA(Glu) + NADPH + H(+). It participates in porphyrin-containing compound metabolism; protoporphyrin-IX biosynthesis; 5-aminolevulinate from L-glutamyl-tRNA(Glu): step 1/2. In terms of biological role, catalyzes the NADPH-dependent reduction of glutamyl-tRNA(Glu) to glutamate 1-semialdehyde (GSA). In Listeria welshimeri serovar 6b (strain ATCC 35897 / DSM 20650 / CCUG 15529 / CIP 8149 / NCTC 11857 / SLCC 5334 / V8), this protein is Glutamyl-tRNA reductase.